The primary structure comprises 63 residues: Large ribosomal subunit protein uL30 (63 aa).

This sequence belongs to the universal ribosomal protein uL30 family. As to quaternary structure, part of the 50S ribosomal subunit.

This chain is Large ribosomal subunit protein uL30, found in Rickettsia akari (strain Hartford).